Reading from the N-terminus, the 147-residue chain is Nucleoside diphosphate kinase (147 aa).

Positions 9, 57, 85, 91, 102, and 112 each coordinate ATP. H115 acts as the Pros-phosphohistidine intermediate in catalysis.

Belongs to the NDK family. In terms of assembly, homotetramer. Mg(2+) is required as a cofactor.

It is found in the cytoplasm. The enzyme catalyses a 2'-deoxyribonucleoside 5'-diphosphate + ATP = a 2'-deoxyribonucleoside 5'-triphosphate + ADP. It carries out the reaction a ribonucleoside 5'-diphosphate + ATP = a ribonucleoside 5'-triphosphate + ADP. Its function is as follows. Major role in the synthesis of nucleoside triphosphates other than ATP. The ATP gamma phosphate is transferred to the NDP beta phosphate via a ping-pong mechanism, using a phosphorylated active-site intermediate. In Kosmotoga olearia (strain ATCC BAA-1733 / DSM 21960 / TBF 19.5.1), this protein is Nucleoside diphosphate kinase.